The following is a 110-amino-acid chain: DNA-directed RNA polymerase subunit omega (110 aa).

Belongs to the RNA polymerase subunit omega family. As to quaternary structure, the RNAP catalytic core consists of 2 alpha, 1 beta, 1 beta' and 1 omega subunit. When a sigma factor is associated with the core the holoenzyme is formed, which can initiate transcription.

It catalyses the reaction RNA(n) + a ribonucleoside 5'-triphosphate = RNA(n+1) + diphosphate. Its function is as follows. Promotes RNA polymerase assembly. Latches the N- and C-terminal regions of the beta' subunit thereby facilitating its interaction with the beta and alpha subunits. In Mycobacterium bovis (strain ATCC BAA-935 / AF2122/97), this protein is DNA-directed RNA polymerase subunit omega (rpoZ).